The following is a 234-amino-acid chain: Triosephosphate isomerase (234 aa).

8-10 contacts substrate; that stretch reads NFK. The active-site Electrophile is His90. Glu159 functions as the Proton acceptor in the catalytic mechanism. Positions 165 and 197 each coordinate substrate.

The protein belongs to the triosephosphate isomerase family. Homodimer.

Its subcellular location is the cytoplasm. It carries out the reaction D-glyceraldehyde 3-phosphate = dihydroxyacetone phosphate. It participates in carbohydrate biosynthesis; gluconeogenesis. It functions in the pathway carbohydrate degradation; glycolysis; D-glyceraldehyde 3-phosphate from glycerone phosphate: step 1/1. Involved in the gluconeogenesis. Catalyzes stereospecifically the conversion of dihydroxyacetone phosphate (DHAP) to D-glyceraldehyde-3-phosphate (G3P). The polypeptide is Triosephosphate isomerase (Helicobacter pylori (strain P12)).